Consider the following 373-residue polypeptide: Glutamine synthetase (373 aa).

Residue Ala-2 is modified to N-acetylalanine. A required for glutamine-induced ubiquitination by CRL4(CRBN) and proteasomal degradation region spans residues 2-25 (ATSASSHLNKGIKQMYMNLPQGEK). An N6-acetyllysine mark is found at Lys-11 and Lys-14. A GS beta-grasp domain is found at 24-106 (EKIQLMYIWV…VFCEVFKYNR (83 aa)). Tyr-104 is modified (phosphotyrosine). Residues 113–373 (LRHSCKRIMD…TGDEPFQYKN (261 aa)) enclose the GS catalytic domain. ATP is bound at residue Glu-134. Residues Glu-134, Glu-136, Glu-196, and Glu-203 each contribute to the Mn(2+) site. 203–208 (EFQIGP) is a binding site for ATP. 246–247 (NW) provides a ligand contact to L-glutamate. Residue His-253 participates in Mn(2+) binding. ATP is bound by residues 255–257 (NFS), Arg-319, and Arg-324. Residue Arg-319 participates in L-glutamate binding. 336 to 338 (YFE) is a binding site for ADP. Glu-338 contributes to the Mn(2+) binding site. Position 340 (Arg-340) interacts with L-glutamate. A Phosphoserine modification is found at Ser-343.

This sequence belongs to the glutamine synthetase family. As to quaternary structure, decamer; composed of two pentamers. Interacts with PALMD. Interacts with RHOJ. Interacts with BEST2; this interaction tethers a fraction of GLUL to the membrane, causing a decrease of cytosolic glutamine synthase (GS) activity and inhibits the chloride channel activity of BEST2 by affecting the gating at the aperture in the absence of intracellular glutamate. It depends on Mg(2+) as a cofactor. Requires Mn(2+) as cofactor. Post-translationally, palmitoylated; undergoes autopalmitoylation. In terms of processing, acetylated by EP300/p300; acetylation is stimulated by increased glutamine levels and promotes ubiquitin-mediated proteasomal degradation. Ubiquitinated by ZNRF1. Ubiquitinated by the DCX (DDB1-CUL4-X-box) E3 ubiquitin-protein ligase complex called CRL4(CRBN), leading to proteasomal degradation. In terms of tissue distribution, in the adult liver, expression is restricted to a small population of hepatocytes which form only a small rim of one to three hepatocytes around the central veins. Expressed in lung microvascular endothelial cells.

Its subcellular location is the cytoplasm. The protein resides in the cytosol. The protein localises to the microsome. It localises to the mitochondrion. It is found in the cell membrane. The catalysed reaction is L-glutamate + NH4(+) + ATP = L-glutamine + ADP + phosphate + H(+). It carries out the reaction L-cysteinyl-[protein] + hexadecanoyl-CoA = S-hexadecanoyl-L-cysteinyl-[protein] + CoA. With respect to regulation, glutamine synthetase activity is inhibited by methionine sulfoximine (MSO). In terms of biological role, glutamine synthetase that catalyzes the ATP-dependent conversion of glutamate and ammonia to glutamine. Its role depends on tissue localization: in the brain, it regulates the levels of toxic ammonia and converts neurotoxic glutamate to harmless glutamine, whereas in the liver, it is one of the enzymes responsible for the removal of ammonia. Plays a key role in ammonium detoxification during erythropoiesis: the glutamine synthetase activity is required to remove ammonium generated by porphobilinogen deaminase (HMBS) during heme biosynthesis to prevent ammonium accumulation and oxidative stress. Essential for proliferation of fetal skin fibroblasts. Independently of its glutamine synthetase activity, required for endothelial cell migration during vascular development. Involved in angiogenesis by regulating membrane localization and activation of the GTPase RHOJ, possibly by promoting RHOJ palmitoylation. May act as a palmitoyltransferase for RHOJ: able to autopalmitoylate and then transfer the palmitoyl group to RHOJ. Plays a role in ribosomal 40S subunit biogenesis. Through the interaction with BEST2, inhibits BEST2 channel activity by affecting the gating at the aperture in the absence of intracellular L-glutamate, but sensitizes BEST2 to intracellular L-glutamate, which promotes the opening of BEST2 and thus relieves its inhibitory effect on BEST2. The chain is Glutamine synthetase from Rattus norvegicus (Rat).